The chain runs to 162 residues: Cytochrome c-type biogenesis protein CcmE (162 aa).

Residues 1–13 (MSFWPQSRKARRR) lie on the Cytoplasmic side of the membrane. A helical; Signal-anchor for type II membrane protein membrane pass occupies residues 14–34 (LTILLAIAPVLALAVGLALYG). Residues 35-162 (LRDSISLFYT…DAPAYGSQKP (128 aa)) are Periplasmic-facing. Positions 128 and 132 each coordinate heme. Residues 140–151 (ALKEQGEWRGEG) show a composition bias toward basic and acidic residues. The segment at 140 to 162 (ALKEQGEWRGEGADAPAYGSQKP) is disordered.

This sequence belongs to the CcmE/CycJ family.

It localises to the cell inner membrane. Heme chaperone required for the biogenesis of c-type cytochromes. Transiently binds heme delivered by CcmC and transfers the heme to apo-cytochromes in a process facilitated by CcmF and CcmH. This chain is Cytochrome c-type biogenesis protein CcmE, found in Caulobacter vibrioides (strain ATCC 19089 / CIP 103742 / CB 15) (Caulobacter crescentus).